The following is a 191-amino-acid chain: Protein Ves (191 aa).

Belongs to the Ves family.

The chain is Protein Ves from Escherichia coli O127:H6 (strain E2348/69 / EPEC).